The sequence spans 329 residues: Cytosolic arginine sensor for mTORC1 subunit 2 (329 aa).

ACT domains lie at 72–140 and 262–322; these read ADAT…HTLS and ELWK…SALK.

This sequence belongs to the GATS family. As to quaternary structure, forms homodimers and heterodimers with CASTOR1. Interacts with the GATOR2 complex which is composed of MIOS, SEC13, SEH1L, WDR24 and WDR59; the interaction is not regulated by arginine. As to expression, widely expressed.

It is found in the cytoplasm. The protein resides in the cytosol. Functionally, functions as a negative regulator of the TORC1 signaling pathway through the GATOR complex. As part of homodimers or heterodimers with CASTOR1, directly binds and inhibits the GATOR subcomplex GATOR2 and thereby mTORC1. Does not directly bind arginine, but binding of arginine to CASTOR1 disrupts the interaction of CASTOR2-containing heterodimers with GATOR2 which can in turn activate mTORC1 and the TORC1 signaling pathway. This Homo sapiens (Human) protein is Cytosolic arginine sensor for mTORC1 subunit 2.